A 206-amino-acid polypeptide reads, in one-letter code: Holliday junction branch migration complex subunit RuvA (206 aa).

Positions 1-64 are domain I; the sequence is MIGRLTGNLV…ETSQQLFGFI (64 aa). Residues 65 to 142 form a domain II region; sequence DQQDREFFRM…SWQVTPSVDA (78 aa). The interval 143–154 is flexible linker; it reads TGSLVALDSAAP. The tract at residues 155-206 is domain III; it reads SQNAIVAEAESALVALGYKPVEASKAVARVTSDEITRSEDLIRLALRNMIPA.

Belongs to the RuvA family. As to quaternary structure, homotetramer. Forms an RuvA(8)-RuvB(12)-Holliday junction (HJ) complex. HJ DNA is sandwiched between 2 RuvA tetramers; dsDNA enters through RuvA and exits via RuvB. An RuvB hexamer assembles on each DNA strand where it exits the tetramer. Each RuvB hexamer is contacted by two RuvA subunits (via domain III) on 2 adjacent RuvB subunits; this complex drives branch migration. In the full resolvosome a probable DNA-RuvA(4)-RuvB(12)-RuvC(2) complex forms which resolves the HJ.

The protein resides in the cytoplasm. Its function is as follows. The RuvA-RuvB-RuvC complex processes Holliday junction (HJ) DNA during genetic recombination and DNA repair, while the RuvA-RuvB complex plays an important role in the rescue of blocked DNA replication forks via replication fork reversal (RFR). RuvA specifically binds to HJ cruciform DNA, conferring on it an open structure. The RuvB hexamer acts as an ATP-dependent pump, pulling dsDNA into and through the RuvAB complex. HJ branch migration allows RuvC to scan DNA until it finds its consensus sequence, where it cleaves and resolves the cruciform DNA. This Teredinibacter turnerae (strain ATCC 39867 / T7901) protein is Holliday junction branch migration complex subunit RuvA.